The primary structure comprises 154 residues: S-ribosylhomocysteine lyase (154 aa).

Histidine 58, histidine 62, and cysteine 125 together coordinate Fe cation.

It belongs to the LuxS family. Homodimer. It depends on Fe cation as a cofactor.

It carries out the reaction S-(5-deoxy-D-ribos-5-yl)-L-homocysteine = (S)-4,5-dihydroxypentane-2,3-dione + L-homocysteine. Its function is as follows. Involved in the synthesis of autoinducer 2 (AI-2) which is secreted by bacteria and is used to communicate both the cell density and the metabolic potential of the environment. The regulation of gene expression in response to changes in cell density is called quorum sensing. Catalyzes the transformation of S-ribosylhomocysteine (RHC) to homocysteine (HC) and 4,5-dihydroxy-2,3-pentadione (DPD). This chain is S-ribosylhomocysteine lyase, found in Dichelobacter nodosus (strain VCS1703A).